We begin with the raw amino-acid sequence, 447 residues long: UDP-N-acetylmuramoyl-L-alanyl-D-glutamate--2,6-diaminopimelate ligase (447 aa).

Position 21 (Thr21) interacts with UDP-N-acetyl-alpha-D-muramoyl-L-alanyl-D-glutamate. 74 to 80 (GTNGKTT) contributes to the ATP binding site. Residues 117-118 (TT), Ser144, Gln150, and Arg152 contribute to the UDP-N-acetyl-alpha-D-muramoyl-L-alanyl-D-glutamate site. Residue Lys184 is modified to N6-carboxylysine. Residues Arg340, 364-367 (DNPR), Gly415, and Glu419 each bind meso-2,6-diaminopimelate. The Meso-diaminopimelate recognition motif signature appears at 364–367 (DNPR).

Belongs to the MurCDEF family. MurE subfamily. Mg(2+) is required as a cofactor. Post-translationally, carboxylation is probably crucial for Mg(2+) binding and, consequently, for the gamma-phosphate positioning of ATP.

Its subcellular location is the cytoplasm. The catalysed reaction is UDP-N-acetyl-alpha-D-muramoyl-L-alanyl-D-glutamate + meso-2,6-diaminopimelate + ATP = UDP-N-acetyl-alpha-D-muramoyl-L-alanyl-gamma-D-glutamyl-meso-2,6-diaminopimelate + ADP + phosphate + H(+). It participates in cell wall biogenesis; peptidoglycan biosynthesis. Functionally, catalyzes the addition of meso-diaminopimelic acid to the nucleotide precursor UDP-N-acetylmuramoyl-L-alanyl-D-glutamate (UMAG) in the biosynthesis of bacterial cell-wall peptidoglycan. This is UDP-N-acetylmuramoyl-L-alanyl-D-glutamate--2,6-diaminopimelate ligase from Helicobacter pylori (strain J99 / ATCC 700824) (Campylobacter pylori J99).